A 564-amino-acid chain; its full sequence is Urease subunit alpha (564 aa).

Positions 126–564 (GGIDTHIHFI…LPMAQRYFLF (439 aa)) constitute a Urease domain. Residues histidine 131, histidine 133, and lysine 214 each coordinate Ni(2+). N6-carboxylysine is present on lysine 214. Histidine 216 is a substrate binding site. Positions 243 and 269 each coordinate Ni(2+). The Proton donor role is filled by histidine 317. Aspartate 357 provides a ligand contact to Ni(2+).

The protein belongs to the metallo-dependent hydrolases superfamily. Urease alpha subunit family. As to quaternary structure, heterotrimer of UreA (gamma), UreB (beta) and UreC (alpha) subunits. Three heterotrimers associate to form the active enzyme. Requires Ni cation as cofactor. In terms of processing, carboxylation allows a single lysine to coordinate two nickel ions.

It is found in the cytoplasm. It catalyses the reaction urea + 2 H2O + H(+) = hydrogencarbonate + 2 NH4(+). Its pathway is nitrogen metabolism; urea degradation; CO(2) and NH(3) from urea (urease route): step 1/1. In Burkholderia thailandensis (strain ATCC 700388 / DSM 13276 / CCUG 48851 / CIP 106301 / E264), this protein is Urease subunit alpha.